A 212-amino-acid chain; its full sequence is N-(5'-phosphoribosyl)anthranilate isomerase (212 aa).

The protein belongs to the TrpF family.

The catalysed reaction is N-(5-phospho-beta-D-ribosyl)anthranilate = 1-(2-carboxyphenylamino)-1-deoxy-D-ribulose 5-phosphate. It functions in the pathway amino-acid biosynthesis; L-tryptophan biosynthesis; L-tryptophan from chorismate: step 3/5. In Microcystis aeruginosa (strain NIES-843 / IAM M-2473), this protein is N-(5'-phosphoribosyl)anthranilate isomerase.